The following is a 212-amino-acid chain: Outer-membrane lipoprotein LolB (212 aa).

The first 16 residues, Met-1 to Gly-16, serve as a signal peptide directing secretion. Cys-17 carries the N-palmitoyl cysteine lipid modification. A lipid anchor (S-diacylglycerol cysteine) is attached at Cys-17.

The protein belongs to the LolB family. Monomer.

It localises to the cell outer membrane. Functionally, plays a critical role in the incorporation of lipoproteins in the outer membrane after they are released by the LolA protein. This Nitrosomonas europaea (strain ATCC 19718 / CIP 103999 / KCTC 2705 / NBRC 14298) protein is Outer-membrane lipoprotein LolB.